A 239-amino-acid chain; its full sequence is uncharacterized protein (239 aa).

The first 23 residues, 1–23 (MKTMVAMLLAAVGVAVSASSTLA), serve as a signal peptide directing secretion. A compositionally biased stretch (basic and acidic residues) spans 220 to 230 (AHPKQTLRDQR). Residues 220-239 (AHPKQTLRDQRPAGGDEITK) form a disordered region.

This is an uncharacterized protein from Sinorhizobium fredii (strain NBRC 101917 / NGR234).